The chain runs to 591 residues: Protein misato homolog 1 (591 aa).

This sequence belongs to the misato family.

It localises to the mitochondrion outer membrane. The protein localises to the cytoplasm. Functionally, involved in the regulation of mitochondrial distribution and morphology. Required for mitochondrial fusion and mitochondrial network formation. The sequence is that of Protein misato homolog 1 (msto1) from Danio rerio (Zebrafish).